Here is a 513-residue protein sequence, read N- to C-terminus: Na(+)/H(+) antiporter NhaB (513 aa).

Helical transmembrane passes span 23–43, 52–72, 97–117, 120–140, 144–164, 202–222, 238–258, 303–323, 348–368, 391–411, 447–467, and 475–495; these read LALIIFLIVNPLIFLISPFVA, IFTLAMALKCYPLLPGGLLAI, LLLMFMVAGIYFMKQLLLFIF, LLLSIRSKMLLSLSFCVAAAF, FLDALTVVAVVISVAVGFYGI, LMMHAGVGTALGGVMTMVGEP, FFLRMSPVTVPVLICGLLTCL, AIIGVWLVTALALHLAEVGLI, TESLPFTALLTVFFSVVAVII, LFYIFNGLLSSISDNVFVGTI, ATPNGQAAFLFLLTSALAPLI, and VWMALPYTLVLTVAGLLCVEF.

The protein belongs to the NhaB Na(+)/H(+) (TC 2.A.34) antiporter family.

Its subcellular location is the cell inner membrane. It catalyses the reaction 2 Na(+)(in) + 3 H(+)(out) = 2 Na(+)(out) + 3 H(+)(in). Its function is as follows. Na(+)/H(+) antiporter that extrudes sodium in exchange for external protons. The polypeptide is Na(+)/H(+) antiporter NhaB (Escherichia coli O127:H6 (strain E2348/69 / EPEC)).